The following is an 884-amino-acid chain: MIQQYLKVKADYQDAFLFFRLGDFYEMFFEDAVKAAHELEITLTSRDGGSSERIPMCGVPYHAAKNYIEQLVEKGYKVAVCEQVEDPKTAKGVVRREVVQLITPGTMMEGRTIDEKENNFLAALTHFEDGSYALACNDLTTGQNTVTLLTGSVEDILLEVYATGSKEIVVDSSFSKDELNKLTETLKMTISYEDATAIPEGLEHLVKNVSQAKLIKAVGRLFNYVIRTQKRSLDHLQPVEIYYTNQFMKIDVHSKRNLELTETLRTKEKTGSLLWLLDKTKTAMGGRMLKQWMERPLIQKERIEERLEMVETFVNDYFLREDLKEKLKEVYDLERLAGKVAFGNVNARDLLQLRRSLLQVPAILEAISLLDNAYASRLIQGADPCESLTELLGRSIQENPPLSIKDGDIIKDGYNDKLDQYRYVSKNGKTWIAELEKRERDITGIKSLKIGYNRIFGYYIEVTKANLAALPEGRYERKQTLANAERFITDELKEKETLILEAEEKIVQLEYDLFTALREEVKVFIPKLQHLAKVISELDVLQSFATVSEEEQFVKLVLTTKREIFIKDGRHPVVEKVLNGKLYVPNDCIMPEKMDVFLITGPNMSGKSTYMRQLALVTVMSQIGCFVPATEAVLPVFDQIFTRIGAADDLISGQSTFMVEMLEAKNAIANASERSLILFDEIGRGTSTYDGMALAQAIIEHIHDQIGAKTLFSTHYHELTVLEESLDQLKNVHVSAIEENGKVVFLHKIQDGAADKSYGIHVAQLAELPDSLIARAKEVLAQLEGQEEIIIPKRVEVKVQEAAPEPVVVKEEIAEIQETKVETEEESQLSFFGGEQSSKKQDKPLLDQKETAVLAQIKKIDLLDMTPLEAMNELYRLQKKLKKG.

An ATP-binding site is contributed by 601 to 608 (GPNMSGKS). A disordered region spans residues 826 to 845 (ESQLSFFGGEQSSKKQDKPL).

The protein belongs to the DNA mismatch repair MutS family.

This protein is involved in the repair of mismatches in DNA. It is possible that it carries out the mismatch recognition step. This protein has a weak ATPase activity. The protein is DNA mismatch repair protein MutS of Bacillus cereus (strain ATCC 14579 / DSM 31 / CCUG 7414 / JCM 2152 / NBRC 15305 / NCIMB 9373 / NCTC 2599 / NRRL B-3711).